Consider the following 90-residue polypeptide: Large ribosomal subunit protein eL33 (90 aa).

This sequence belongs to the eukaryotic ribosomal protein eL33 family.

This is Large ribosomal subunit protein eL33 from Methanopyrus kandleri (strain AV19 / DSM 6324 / JCM 9639 / NBRC 100938).